The following is a 406-amino-acid chain: E3 ubiquitin-protein ligase RING1 (406 aa).

Thr-24 is modified (phosphothreonine). The tract at residues 30-234 (MDGTEIAVSP…GGAGSEDSGD (205 aa)) is necessary for transcriptional repression. A Phosphoserine modification is found at Ser-38. Residues 48-88 (CPICLDMLKNTMTTKECLHRFCSDCIVTALRSGNKECPTCR) form an RING-type zinc finger. 3 positions are modified to phosphoserine: Ser-140, Ser-187, and Ser-190. 2 disordered regions span residues 151-263 (HRAQ…GEIE) and 309-354 (QQQE…PSLE). Over residues 175–187 (EPGEGEGDGEDIS) the composition is skewed to acidic residues. The Nuclear localization signal motif lies at 201–204 (KRPR). Residues 205 to 228 (GGGAGGSSVGTGGGAAGGACGGAG) are compositionally biased toward gly residues. Thr-215 bears the Phosphothreonine mark. Phosphoserine is present on residues Ser-229 and Ser-232. The interval 230–406 (EDSGDRGGTL…LCYAPTKDPK (177 aa)) is necessary for interaction with CBX2. Over residues 235-244 (RGGTLGGGTL) the composition is skewed to gly residues. Residues 246 to 258 (PPSPPGAPSPPEP) are compositionally biased toward pro residues. Phosphoserine is present on residues Ser-248 and Ser-254. Over residues 317–343 (GGPGGGASDTGGPDGGGGERGVSGGGE) the composition is skewed to gly residues.

As to quaternary structure, component of chromatin-associated Polycomb (PcG) complexes. Part of the E2F6.com-1 complex in G0 phase composed of E2F6, MGA, MAX, TFDP1, CBX3, BAT8, EUHMTASE1, RING1, RNF2/RING2 MBLR, L3MBTL2 and YAF2. Interacts with CBX2 and PCGF6. Component of a PRC1-like complex. Component of repressive BCOR complex containing Polycomb group subcomplex at least composed of RYBP, PCGF1, BCOR and RNF2/RING2. Interacts with BMI1, PHC2, PCGF2, RNF2; CBX6, CBX7 and CBX8. Interacts with MN1. Interacts with USP26.

The protein localises to the nucleus speckle. It catalyses the reaction S-ubiquitinyl-[E2 ubiquitin-conjugating enzyme]-L-cysteine + [acceptor protein]-L-lysine = [E2 ubiquitin-conjugating enzyme]-L-cysteine + N(6)-ubiquitinyl-[acceptor protein]-L-lysine.. Its pathway is protein modification; protein ubiquitination. Functionally, constitutes one of the E3 ubiquitin-protein ligases that mediate monoubiquitination of 'Lys-119' of histone H2A, thereby playing a central role in histone code and gene regulation. H2A 'Lys-119' ubiquitination gives a specific tag for epigenetic transcriptional repression and participates in X chromosome inactivation of female mammals. Essential component of a Polycomb group (PcG) multiprotein PRC1-like complex, a complex class required to maintain the transcriptionally repressive state of many genes, including Hox genes, throughout development. PcG PRC1 complex acts via chromatin remodeling and modification of histones, rendering chromatin heritably changed in its expressibility. Compared to RNF2/RING2, it does not have the main E3 ubiquitin ligase activity on histone H2A, and it may rather act as a modulator of RNF2/RING2 activity. In Rattus norvegicus (Rat), this protein is E3 ubiquitin-protein ligase RING1.